Consider the following 442-residue polypeptide: MKLQYLVALLSVQAVPPVTAGYIHQYALVGSAIRQPIDQKTQREDLNKLVSDSPLLSLHRTICEIESVSNREGAVGEVLLKYLRDRGFTVEKQIVPADRGTNSTAERFNIWAYPKGCPRPKIILTSHIDTVPPHIKYSLHAPDGDFDRAKVRIMGRGTVDAKASVAAQIIAALKHLKSNKDIPLGLLFVVSEEVGGSGMVHFSNSELNTNPPFFHTLIFGEPTDLTLVDGHKGNLRVTIEAKGVAAHSGYPWLGRSAISEILPILARMDELGDIPVETGGLPSSEKYGRTTVNIGTIKGGAADNVVPETASASIAVRLAAGTPEEAEEIIRRAVYDVSGGSTNITVNFPDSMPYPPIDLDVDVEGFDISTVNYGTDIPKLEIHDEELEVKVKRYLYGPGTIFVAHGAEEGITVGDLEKAVEGYSKLIDAAVKRGWPREVVVN.

The first 20 residues, 1–20 (MKLQYLVALLSVQAVPPVTA), serve as a signal peptide directing secretion. A glycan (N-linked (GlcNAc...) asparagine) is linked at Asn102. Asp160 is a Zn(2+) binding site. The Proton acceptor role is filled by Glu192. Residue Glu193 participates in Zn(2+) binding. An N-linked (GlcNAc...) asparagine glycan is attached at Asn343.

This sequence belongs to the peptidase M20A family. It depends on Zn(2+) as a cofactor.

Its subcellular location is the secreted. This is Probable carboxypeptidase PABG_01461 from Paracoccidioides brasiliensis (strain Pb03).